The primary structure comprises 453 residues: Methylenetetrahydrofolate--tRNA-(uracil-5-)-methyltransferase TrmFO (453 aa).

FAD is bound at residue 10–15; that stretch reads GGGLAG. Positions 433 to 453 are disordered; sequence ELAPWIDSAPPTAVPAAPAAG. A compositionally biased stretch (low complexity) spans 441-453; that stretch reads APPTAVPAAPAAG.

The protein belongs to the MnmG family. TrmFO subfamily. It depends on FAD as a cofactor.

Its subcellular location is the cytoplasm. The catalysed reaction is uridine(54) in tRNA + (6R)-5,10-methylene-5,6,7,8-tetrahydrofolate + NADH + H(+) = 5-methyluridine(54) in tRNA + (6S)-5,6,7,8-tetrahydrofolate + NAD(+). It carries out the reaction uridine(54) in tRNA + (6R)-5,10-methylene-5,6,7,8-tetrahydrofolate + NADPH + H(+) = 5-methyluridine(54) in tRNA + (6S)-5,6,7,8-tetrahydrofolate + NADP(+). In terms of biological role, catalyzes the folate-dependent formation of 5-methyl-uridine at position 54 (M-5-U54) in all tRNAs. This is Methylenetetrahydrofolate--tRNA-(uracil-5-)-methyltransferase TrmFO from Anaeromyxobacter dehalogenans (strain 2CP-1 / ATCC BAA-258).